Consider the following 218-residue polypeptide: Histone H1 (218 aa).

Low complexity predominate over residues 1 to 19 (MSETAPVAAPAVSAPGAKA). Disordered regions lie at residues 1 to 42 (MSET…PSVT) and 89 to 218 (VSKG…TKKK). S2 carries the post-translational modification N-acetylserine. An H15 domain is found at 37 to 110 (AGPSVTELIT…GASGSFKLNK (74 aa)). Composition is skewed to basic residues over residues 118-133 (KATK…KPAA), 141-158 (KKPK…KAKK), 166-184 (KAAK…KKTA), and 191-218 (KAVK…TKKK).

Belongs to the histone H1/H5 family.

Its subcellular location is the nucleus. It localises to the chromosome. Functionally, histones H1 are necessary for the condensation of nucleosome chains into higher-order structures. The protein is Histone H1 of Gallus gallus (Chicken).